A 365-amino-acid chain; its full sequence is MPDPLPLVFDAPRRALPPRHFADLADTERAAAVADLGLPAFRGKQLANQYFGRLISDPSQMTDLPAGVRDQVGAALFPELLEAAREIECDRGETRKVLWRAVDKTTFESVLMRYPDRNTVCISSQAGCGMACPFCATGQGGLKRNLSTAEILEQVRFASAELRDREGGRLSNIVFMGMGEPLANYNRVVAAVRRITASSPHGFGISARSVTVSTVGLAPAIRKLADEKLNVTLAVSLHTPDDELRDTLVPVNNRWKVDEVLDAARYYADLTGRRVSIEYALIRDVNDQPWRADLLGRKLHATLGPLVHVNLIPLNPTPGSEWDASPKPVEREFVRRVRAKGVSCTVRDTRGREIAAACGQLAAQG.

Catalysis depends on Glu-108, which acts as the Proton acceptor. Residues 114–352 (YPDRNTVCIS…SCTVRDTRGR (239 aa)) enclose the Radical SAM core domain. Cys-121 and Cys-358 are disulfide-bonded. Positions 128, 132, and 135 each coordinate [4Fe-4S] cluster. Residues 179-180 (GE), Ser-213, 236-238 (SLH), and Asn-315 contribute to the S-adenosyl-L-methionine site. Cys-358 serves as the catalytic S-methylcysteine intermediate.

Belongs to the radical SAM superfamily. RlmN family. It depends on [4Fe-4S] cluster as a cofactor.

It is found in the cytoplasm. The catalysed reaction is adenosine(2503) in 23S rRNA + 2 reduced [2Fe-2S]-[ferredoxin] + 2 S-adenosyl-L-methionine = 2-methyladenosine(2503) in 23S rRNA + 5'-deoxyadenosine + L-methionine + 2 oxidized [2Fe-2S]-[ferredoxin] + S-adenosyl-L-homocysteine. It carries out the reaction adenosine(37) in tRNA + 2 reduced [2Fe-2S]-[ferredoxin] + 2 S-adenosyl-L-methionine = 2-methyladenosine(37) in tRNA + 5'-deoxyadenosine + L-methionine + 2 oxidized [2Fe-2S]-[ferredoxin] + S-adenosyl-L-homocysteine. In terms of biological role, specifically methylates position 2 of adenine 2503 in 23S rRNA and position 2 of adenine 37 in tRNAs. This Mycolicibacterium gilvum (strain PYR-GCK) (Mycobacterium gilvum (strain PYR-GCK)) protein is Probable dual-specificity RNA methyltransferase RlmN.